The following is a 151-amino-acid chain: Small ribosomal subunit protein uS11A (151 aa).

Residues 131-151 are disordered; it reads DVTPIPSDSTRRKGGRRGRRL. Residues 142-151 show a composition bias toward basic residues; it reads RKGGRRGRRL.

It belongs to the universal ribosomal protein uS11 family.

This is Small ribosomal subunit protein uS11A from Drosophila melanogaster (Fruit fly).